Consider the following 466-residue polypeptide: UDP-N-acetylmuramoylalanine--D-glutamate ligase (466 aa).

122-128 serves as a coordination point for ATP; the sequence is GTNGKTT.

Belongs to the MurCDEF family.

It localises to the cytoplasm. The catalysed reaction is UDP-N-acetyl-alpha-D-muramoyl-L-alanine + D-glutamate + ATP = UDP-N-acetyl-alpha-D-muramoyl-L-alanyl-D-glutamate + ADP + phosphate + H(+). It functions in the pathway cell wall biogenesis; peptidoglycan biosynthesis. Cell wall formation. Catalyzes the addition of glutamate to the nucleotide precursor UDP-N-acetylmuramoyl-L-alanine (UMA). This Aromatoleum aromaticum (strain DSM 19018 / LMG 30748 / EbN1) (Azoarcus sp. (strain EbN1)) protein is UDP-N-acetylmuramoylalanine--D-glutamate ligase.